The primary structure comprises 370 residues: Platelet-derived growth factor D (370 aa).

Residues 1-23 (MHRLILVSILVCANFCCYRDTFA) form the signal peptide. The CUB domain occupies 52 to 170 (RDENIRVTGT…PGFKIYYSFV (119 aa)). C109 and C131 are disulfide-bonded. N-linked (GlcNAc...) asparagine glycosylation is present at N276. 2 disulfides stabilise this stretch: C302–C360 and C306–C362.

The protein belongs to the PDGF/VEGF growth factor family. As to quaternary structure, homodimer; disulfide-linked. Interacts with PDGFRB homodimers, and with heterodimers formed by PDGFRA and PDGFRB. Activated by proteolytic cleavage. Proteolytic removal of the N-terminal CUB domain releasing the core domain is necessary for unmasking the receptor-binding epitopes of the core domain. Cleavage after Arg-247 or Arg-249 by urokinase plasminogen activator gives rise to the active form. As to expression, widely expressed. Expressed at high levels in the kidney, adrenal glands, eye and CNS. In the kidney the localization is confined to arterial and arteriolar vascular smooth muscle cells and is also detected at low levels in the glomeruli In the eye in the anterior segment it is localized to the iris and ciliary body. In the retina localizes intensely to the outer plexiform layer, which contains photoreceptor axons and the synaptic layer between photoreceptors and second order neurons. In the spinal cord, prominently expressed in the motorneurons.

The protein localises to the secreted. In terms of biological role, growth factor that plays an essential role in the regulation of embryonic development, cell proliferation, cell migration, survival and chemotaxis. Potent mitogen for cells of mesenchymal origin. Plays an important role in wound healing. Induces macrophage recruitment, increased interstitial pressure, and blood vessel maturation during angiogenesis. May play an important role in control of lens epithelial cell proliferation. Can initiate events that lead to a mesangial proliferative glomerulonephritis, including influx of monocytes and macrophages and production of extracellular matrix. The protein is Platelet-derived growth factor D (Pdgfd) of Rattus norvegicus (Rat).